The chain runs to 337 residues: Histidine N-acetyltransferase (337 aa).

Positions 1–2 (MK) are cleaved as a propeptide — removed in mature form. The region spanning 21–156 (LQFAVATEED…QGILLVRFRA (136 aa)) is the N-acetyltransferase domain.

The enzyme catalyses L-histidine + acetyl-CoA = N(alpha)-acetyl-L-histidine + CoA + H(+). In terms of biological role, enzyme responsible for the N-acetyl-histidine (NAH) synthesis, which is a major constituent of brain and lens of ectothermic vertebrates. The chain is Histidine N-acetyltransferase (hisat) from Scomber australasicus (Blue mackerel).